The primary structure comprises 179 residues: Negative modulator of initiation of replication (179 aa).

Residues 86-87 (AV) are interaction with DNA.

Belongs to the SeqA family. As to quaternary structure, homodimer. Polymerizes to form helical filaments.

The protein resides in the cytoplasm. Its function is as follows. Negative regulator of replication initiation, which contributes to regulation of DNA replication and ensures that replication initiation occurs exactly once per chromosome per cell cycle. Binds to pairs of hemimethylated GATC sequences in the oriC region, thus preventing assembly of replication proteins and re-initiation at newly replicated origins. Repression is relieved when the region becomes fully methylated. The polypeptide is Negative modulator of initiation of replication (Shewanella woodyi (strain ATCC 51908 / MS32)).